The sequence spans 439 residues: Trigger factor (439 aa).

A PPIase FKBP-type domain is found at glycine 162 to proline 247.

The protein belongs to the FKBP-type PPIase family. Tig subfamily.

It localises to the cytoplasm. The enzyme catalyses [protein]-peptidylproline (omega=180) = [protein]-peptidylproline (omega=0). Involved in protein export. Acts as a chaperone by maintaining the newly synthesized protein in an open conformation. Functions as a peptidyl-prolyl cis-trans isomerase. In Lactobacillus delbrueckii subsp. bulgaricus (strain ATCC 11842 / DSM 20081 / BCRC 10696 / JCM 1002 / NBRC 13953 / NCIMB 11778 / NCTC 12712 / WDCM 00102 / Lb 14), this protein is Trigger factor.